A 309-amino-acid chain; its full sequence is Small ribosomal subunit protein uS7m (309 aa).

The interval 39–86 (DSTTSSRLPPRVQIQQQQQQRTQPYSTETTPPPNSNNGDLAGIEGQPP) is disordered. Over residues 51 to 61 (QIQQQQQQRTQ) the composition is skewed to low complexity.

This sequence belongs to the universal ribosomal protein uS7 family. In terms of assembly, component of the mitochondrial small ribosomal subunit (mt-SSU). Mature N.crassa 74S mitochondrial ribosomes consist of a small (37S) and a large (54S) subunit. The 37S small subunit contains a 16S ribosomal RNA (16S mt-rRNA) and 32 different proteins. The 54S large subunit contains a 23S rRNA (23S mt-rRNA) and 42 different proteins.

It is found in the mitochondrion. Component of the mitochondrial ribosome (mitoribosome), a dedicated translation machinery responsible for the synthesis of mitochondrial genome-encoded proteins, including at least some of the essential transmembrane subunits of the mitochondrial respiratory chain. The mitoribosomes are attached to the mitochondrial inner membrane and translation products are cotranslationally integrated into the membrane. The protein is Small ribosomal subunit protein uS7m (rsm7) of Neurospora crassa (strain ATCC 24698 / 74-OR23-1A / CBS 708.71 / DSM 1257 / FGSC 987).